The sequence spans 161 residues: Ribonuclease P protein component (161 aa).

The tract at residues 1-20 (MPDELRAEKSFPSKPYDSLK) is disordered.

It belongs to the RnpA family. Consists of a catalytic RNA component (M1 or rnpB) and a protein subunit.

It catalyses the reaction Endonucleolytic cleavage of RNA, removing 5'-extranucleotides from tRNA precursor.. Its function is as follows. RNaseP catalyzes the removal of the 5'-leader sequence from pre-tRNA to produce the mature 5'-terminus. It can also cleave other RNA substrates such as 4.5S RNA. The protein component plays an auxiliary but essential role in vivo by binding to the 5'-leader sequence and broadening the substrate specificity of the ribozyme. The chain is Ribonuclease P protein component from Helicobacter pylori (strain P12).